A 358-amino-acid chain; its full sequence is Peptide chain release factor 1 (358 aa).

An N5-methylglutamine modification is found at glutamine 233.

It belongs to the prokaryotic/mitochondrial release factor family. Methylated by PrmC. Methylation increases the termination efficiency of RF1.

It localises to the cytoplasm. In terms of biological role, peptide chain release factor 1 directs the termination of translation in response to the peptide chain termination codons UAG and UAA. The chain is Peptide chain release factor 1 from Beijerinckia indica subsp. indica (strain ATCC 9039 / DSM 1715 / NCIMB 8712).